The primary structure comprises 4835 residues: Midasin (4835 aa).

AAA-ATPase protomer stretches follow at residues 12 to 161, 324 to 689, 797 to 1049, 1096 to 1375, 1489 to 1738, and 1821 to 2110; these read EVLR…PLVL, RSLD…HRFR, MTTI…AEII, KFQD…DYIT, APTT…FGYR, and ALEA…SIDI. ATP contacts are provided by residues 31 to 38, 356 to 363, 814 to 821, 1127 to 1134, 1513 to 1520, and 1839 to 1846; these read GPSASGRT, GPTGIGKT, GTTSSGKT, GVSGAGKT, GDPGVGKS, and GSPESGKS. Residues 2197 to 4058 form a linker region; sequence SVFIASTLNA…DGTGDQNVSK (1862 aa). 2 disordered regions span residues 4033–4056 and 4108–4523; these read DQKETDNDNQSGLGLGDGTGDQNV and IEEE…LLNP. Composition is skewed to acidic residues over residues 4109-4133, 4141-4150, 4226-4241, 4282-4291, and 4315-4330; these read EEEDSNGSDEEEVLEKEMGDEQGEA, EDDDSAEEYS, ADGEDETVNEELEEEQ, VDIDDNEASD, and NDEEEMQKDTEYDQEN. The span at 4331–4346 shows a compositional bias: polar residues; that stretch reads ITDSNPDANEVGTNDQ. Composition is skewed to basic and acidic residues over residues 4347-4360, 4394-4415, and 4429-4438; these read KQTHEDNDQFRQEN, EFQRIWKERLNIHDRESEKDEA, and VEFDDSKSGR. Polar residues predominate over residues 4468-4477; that stretch reads HNSSCETSQS. Residues 4478 to 4488 are compositionally biased toward basic and acidic residues; sequence SHDRPPAEHLN. The VWFA domain maps to 4629–4818; that stretch reads QVLLAVDDSS…RHIEDLPETL (190 aa).

It belongs to the midasin family. As to quaternary structure, associates with pre-60S ribosomes in the nucleoplasm.

The protein resides in the nucleus. It localises to the nucleolus. The protein localises to the nucleoplasm. Its function is as follows. Nuclear chaperone required for maturation and nuclear export of pre-60S ribosome subunits. Functions at successive maturation steps to remove ribosomal factors at critical transition points, first driving the exit of early pre-60S particles from the nucleolus and then driving late pre-60S particles from the nucleus. This chain is Midasin (MDN1), found in Giardia intestinalis (Giardia lamblia).